Here is a 532-residue protein sequence, read N- to C-terminus: Cyclin-L1 (532 aa).

Cyclin-like stretches follow at residues 94–196 and 209–293; these read ELIQ…RVLK and KIIV…ETLR. Thr331 is modified (phosphothreonine). Residues 332 to 532 form a disordered region; that stretch reads PALSTLGGFS…SRSGHGRHRR (201 aa). Phosphoserine occurs at positions 341 and 344. Glycyl lysine isopeptide (Lys-Gly) (interchain with G-Cter in SUMO2) cross-links involve residues Lys345 and Lys353. A compositionally biased stretch (basic and acidic residues) spans 348-358; it reads SPREVKAEEKS. 2 positions are modified to phosphoserine: Ser358 and Ser361. Positions 367 to 376 are enriched in basic and acidic residues; the sequence is VKKEPEDRQQ. Lys368 is covalently cross-linked (Glycyl lysine isopeptide (Lys-Gly) (interchain with G-Cter in SUMO2)). Position 380 is a phosphoserine (Ser380). 4 stretches are compositionally biased toward basic residues: residues 388 to 424, 444 to 458, 466 to 482, and 492 to 504; these read DSKR…RRSR, RRHH…KAKH, SNRH…RSQS, and KKHR…HRDR. The segment at 396–438 is RS; sequence RSASRSRSRTRSRSRSHSPRRHYNNRRSRSGTYSSRSRSRSRS. Ser451 is modified (phosphoserine). Positions 505–514 are enriched in basic and acidic residues; that stretch reads RERSRSFERS. Residues 515-532 show a composition bias toward basic residues; it reads HKGKHHGGSRSGHGRHRR.

The protein belongs to the cyclin family. Cyclin L subfamily. In terms of assembly, interacts with POLR2A via its hyperphosphorylated C-terminal domain (CTD). Interacts with CDK11A, CDK11B, CDK12 and CDK13. May form a ternary complex with CDK11B and casein kinase II (CKII). Interacts with pre-mRNA-splicing factors, including at least SRSF1, SRSF2 and SRSF7/SLU7. In terms of tissue distribution, widely expressed (at protein level).

It localises to the nucleus speckle. It is found in the nucleus. The protein localises to the nucleoplasm. Its subcellular location is the cytoplasm. Functionally, involved in pre-mRNA splicing. Functions in association with cyclin-dependent kinases (CDKs). May play a role in the regulation of RNA polymerase II (pol II). Inhibited by the CDK-specific inhibitor CDKN1A/p21. This is Cyclin-L1 (Ccnl1) from Mus musculus (Mouse).